We begin with the raw amino-acid sequence, 394 residues long: Probable fimbrial assembly protein FimD, serogroup H1 (394 aa).

This Dichelobacter nodosus (Bacteroides nodosus) protein is Probable fimbrial assembly protein FimD, serogroup H1 (fimD).